The sequence spans 101 residues: Small ribosomal subunit protein uS14 (101 aa).

Belongs to the universal ribosomal protein uS14 family. In terms of assembly, part of the 30S ribosomal subunit. Contacts proteins S3 and S10.

Its function is as follows. Binds 16S rRNA, required for the assembly of 30S particles and may also be responsible for determining the conformation of the 16S rRNA at the A site. This Acinetobacter baumannii (strain SDF) protein is Small ribosomal subunit protein uS14.